The sequence spans 119 residues: Protein BEX4 (119 aa).

Positions 1–53 (MESKEELAANNLNGENAQQENEGREQAPTQNEETRHLGGGEGQKPGGNIRRGR) are disordered. Residues 8 to 20 (AANNLNGENAQQE) show a composition bias toward low complexity. Residues 31-89 (NEETRHLGGGEGQKPGGNIRRGRVRRLVPNFRWAIPNRHIEHNEARDDVERFVGQMMEI) form an interaction with SIRT2 region. An interaction with alpha-tubulin region spans residues 31–119 (NEETRHLGGG…DNHYDFCLIP (89 aa)). Cysteine 116 lines the Zn(2+) pocket.

This sequence belongs to the BEX family. Interacts with alpha-tubulin. Interacts with SIRT2. In terms of processing, ubiquitinated and degraded by the proteasome.

The protein localises to the cytoplasm. It is found in the cytoskeleton. It localises to the spindle pole. Its subcellular location is the nucleus. Functionally, may play a role in microtubule deacetylation by negatively regulating the SIRT2 deacetylase activity toward alpha-tubulin and thereby participate in the control of cell cycle progression and genomic stability. In absence of reductive stress, acts as a pseudosubstrate for the CRL2(FEM1B) complex: associates with FEM1B via zinc, thereby preventing association between FEM1B and its substrates. This is Protein BEX4 from Pongo abelii (Sumatran orangutan).